We begin with the raw amino-acid sequence, 98 residues long: NADH-ubiquinone oxidoreductase chain 4L (98 aa).

3 helical membrane-spanning segments follow: residues 1–21, 29–49, and 61–81; these read MIPTYMNIMLAFTISLLGMLT, SLLCLEGMMMSLFIMTTLIAL, and IILLVFAACEAAVGLALLVSI.

It belongs to the complex I subunit 4L family. As to quaternary structure, core subunit of respiratory chain NADH dehydrogenase (Complex I) which is composed of 45 different subunits.

The protein resides in the mitochondrion inner membrane. It carries out the reaction a ubiquinone + NADH + 5 H(+)(in) = a ubiquinol + NAD(+) + 4 H(+)(out). Functionally, core subunit of the mitochondrial membrane respiratory chain NADH dehydrogenase (Complex I) which catalyzes electron transfer from NADH through the respiratory chain, using ubiquinone as an electron acceptor. Part of the enzyme membrane arm which is embedded in the lipid bilayer and involved in proton translocation. The polypeptide is NADH-ubiquinone oxidoreductase chain 4L (MT-ND4L) (Macaca ochreata subsp. brunnescens (Muna-buton macaque)).